Reading from the N-terminus, the 608-residue chain is Glutamyl-tRNA(Gln) amidotransferase subunit E (608 aa).

This sequence belongs to the GatB/GatE family. GatE subfamily. As to quaternary structure, heterodimer of GatD and GatE.

It catalyses the reaction L-glutamyl-tRNA(Gln) + L-glutamine + ATP + H2O = L-glutaminyl-tRNA(Gln) + L-glutamate + ADP + phosphate + H(+). In terms of biological role, allows the formation of correctly charged Gln-tRNA(Gln) through the transamidation of misacylated Glu-tRNA(Gln) in organisms which lack glutaminyl-tRNA synthetase. The reaction takes place in the presence of glutamine and ATP through an activated gamma-phospho-Glu-tRNA(Gln). The GatDE system is specific for glutamate and does not act on aspartate. This Pyrobaculum aerophilum (strain ATCC 51768 / DSM 7523 / JCM 9630 / CIP 104966 / NBRC 100827 / IM2) protein is Glutamyl-tRNA(Gln) amidotransferase subunit E.